Here is a 517-residue protein sequence, read N- to C-terminus: Putative alpha-L-fucosidase 1 (517 aa).

An N-terminal signal peptide occupies residues 1-20 (MATILLLLLGLLVGLPLLRA). N-linked (GlcNAc...) asparagine glycans are attached at residues Asn-119, Asn-249, Asn-296, Asn-321, Asn-352, Asn-496, and Asn-511.

Belongs to the glycosyl hydrolase 29 family.

The protein localises to the secreted. It is found in the extracellular space. It localises to the apoplast. The enzyme catalyses an alpha-L-fucoside + H2O = L-fucose + an alcohol. Functionally, alpha-L-fucosidase is responsible for hydrolyzing the alpha-1,6-linked fucose joined to the reducing-end N-acetylglucosamine of the carbohydrate moieties of glycoproteins. Active only against 2'-fucosyl-lactitol when heterologously expressed. In Oryza sativa subsp. japonica (Rice), this protein is Putative alpha-L-fucosidase 1.